A 131-amino-acid polypeptide reads, in one-letter code: Glycine cleavage system H protein (131 aa).

One can recognise a Lipoyl-binding domain in the interval 24 to 106 (RAIVGISDHA…YGEGWIMVIE (83 aa)). N6-lipoyllysine is present on Lys-65.

Belongs to the GcvH family. In terms of assembly, the glycine cleavage system is composed of four proteins: P, T, L and H. Requires (R)-lipoate as cofactor.

In terms of biological role, the glycine cleavage system catalyzes the degradation of glycine. The H protein shuttles the methylamine group of glycine from the P protein to the T protein. The polypeptide is Glycine cleavage system H protein (Xylella fastidiosa (strain M12)).